The chain runs to 407 residues: MKPTVWHHLRLCPHGHPDETIDDAAIAVDETGTIAWLGALSALPHGYAHWRREDLHGAWVTPGLVDCHTHLVYGGTRADEFAQRLAGVSYEEIARQGGGIVSTVRATRAADETTLFVQAAARLQPLLAEGVTAIEIKSGYGLDLASERKMLRVARQLGERFPVTVHTTFLGAHALPPEYAGRADAYIDEVCDRMLPTLADEGLVDAVDVFCERIGFSLAQTERVFEAATRRGLPVKLHAEQLSNAGGTALAARYRALSADHLEFLDEAGIEAMKAAGTVAVLLPGAYYFIRETQLPPIELLRKHGVPIALATDHNPGTSPLESLLLTLNMGCTLFRMTVPEVLQGVTRHAAAALGRADRHGALEVGRQADFAVWSVGSLAELAYWIGRPLCEQVVRGGTTVFRRMNG.

Fe(3+) is bound by residues H68 and H70. Zn(2+) contacts are provided by H68 and H70. 4-imidazolone-5-propanoate is bound by residues R77, Y140, and H173. Y140 serves as a coordination point for N-formimidoyl-L-glutamate. Residue H238 coordinates Fe(3+). Position 238 (H238) interacts with Zn(2+). Position 241 (Q241) interacts with 4-imidazolone-5-propanoate. D313 serves as a coordination point for Fe(3+). Zn(2+) is bound at residue D313. Residues N315 and G317 each contribute to the N-formimidoyl-L-glutamate site. 4-imidazolone-5-propanoate is bound at residue T318.

The protein belongs to the metallo-dependent hydrolases superfamily. HutI family. The cofactor is Zn(2+). Fe(3+) serves as cofactor.

The protein localises to the cytoplasm. It catalyses the reaction 4-imidazolone-5-propanoate + H2O = N-formimidoyl-L-glutamate. Its pathway is amino-acid degradation; L-histidine degradation into L-glutamate; N-formimidoyl-L-glutamate from L-histidine: step 3/3. In terms of biological role, catalyzes the hydrolytic cleavage of the carbon-nitrogen bond in imidazolone-5-propanoate to yield N-formimidoyl-L-glutamate. It is the third step in the universal histidine degradation pathway. This is Imidazolonepropionase from Burkholderia cenocepacia (strain ATCC BAA-245 / DSM 16553 / LMG 16656 / NCTC 13227 / J2315 / CF5610) (Burkholderia cepacia (strain J2315)).